We begin with the raw amino-acid sequence, 354 residues long: GTPase Obg (354 aa).

Residues 1 to 159 (MKFVDEVKIH…RDLVLELKLL (159 aa)) enclose the Obg domain. Residues 160-333 (ADVGIVGYPN…LLDAVGRALF (174 aa)) form the OBG-type G domain. Residues 166–173 (GYPNAGKS), 191–195 (FTTLT), 212–215 (DIPG), 283–286 (TKID), and 314–316 (SAV) each bind GTP. Positions 173 and 193 each coordinate Mg(2+).

Belongs to the TRAFAC class OBG-HflX-like GTPase superfamily. OBG GTPase family. In terms of assembly, monomer. Mg(2+) serves as cofactor.

It is found in the cytoplasm. An essential GTPase which binds GTP, GDP and possibly (p)ppGpp with moderate affinity, with high nucleotide exchange rates and a fairly low GTP hydrolysis rate. Plays a role in control of the cell cycle, stress response, ribosome biogenesis and in those bacteria that undergo differentiation, in morphogenesis control. This chain is GTPase Obg, found in Anaeromyxobacter dehalogenans (strain 2CP-1 / ATCC BAA-258).